The primary structure comprises 88 residues: Large ribosomal subunit protein eL31 (88 aa).

The protein belongs to the eukaryotic ribosomal protein eL31 family.

This is Large ribosomal subunit protein eL31 from Saccharolobus islandicus (strain Y.N.15.51 / Yellowstone #2) (Sulfolobus islandicus).